The primary structure comprises 71 residues: Translational regulator CsrA (71 aa).

The tract at residues 50 to 71 is disordered; that stretch reads RIRHEKDGDVPEAAPGQGADPQ.

Belongs to the CsrA/RsmA family. In terms of assembly, homodimer; the beta-strands of each monomer intercalate to form a hydrophobic core, while the alpha-helices form wings that extend away from the core.

It localises to the cytoplasm. In terms of biological role, a key translational regulator that binds mRNA to regulate translation initiation and/or mRNA stability. Mediates global changes in gene expression, shifting from rapid growth to stress survival by linking envelope stress, the stringent response and the catabolite repression systems. Usually binds in the 5'-UTR; binding at or near the Shine-Dalgarno sequence prevents ribosome-binding, repressing translation, binding elsewhere in the 5'-UTR can activate translation and/or stabilize the mRNA. Its function is antagonized by small RNA(s). The polypeptide is Translational regulator CsrA (Halorhodospira halophila (strain DSM 244 / SL1) (Ectothiorhodospira halophila (strain DSM 244 / SL1))).